The chain runs to 77 residues: Acyl carrier protein (77 aa).

Residues 1 to 76 enclose the Carrier domain; the sequence is MSLEDDVKSI…DVITYIKTRQ (76 aa). Residue S36 is modified to O-(pantetheine 4'-phosphoryl)serine.

Belongs to the acyl carrier protein (ACP) family. In terms of processing, 4'-phosphopantetheine is transferred from CoA to a specific serine of apo-ACP by AcpS. This modification is essential for activity because fatty acids are bound in thioester linkage to the sulfhydryl of the prosthetic group.

It localises to the cytoplasm. It participates in lipid metabolism; fatty acid biosynthesis. In terms of biological role, carrier of the growing fatty acid chain in fatty acid biosynthesis. The polypeptide is Acyl carrier protein (Chlamydia caviae (strain ATCC VR-813 / DSM 19441 / 03DC25 / GPIC) (Chlamydophila caviae)).